We begin with the raw amino-acid sequence, 218 residues long: Thiopurine S-methyltransferase (218 aa).

4 residues coordinate S-adenosyl-L-methionine: W10, L45, E66, and R123.

The protein belongs to the class I-like SAM-binding methyltransferase superfamily. TPMT family.

The protein localises to the cytoplasm. The catalysed reaction is S-adenosyl-L-methionine + a thiopurine = S-adenosyl-L-homocysteine + a thiopurine S-methylether.. This is Thiopurine S-methyltransferase from Shewanella putrefaciens (strain CN-32 / ATCC BAA-453).